The primary structure comprises 350 residues: 3-isopropylmalate dehydrogenase (350 aa).

76 to 87 provides a ligand contact to NAD(+); sequence GPKWDNAPKRPE. Substrate-binding residues include Arg-94, Arg-104, Arg-132, and Asp-217. Residues Asp-217, Asp-241, and Asp-245 each coordinate Mg(2+). NAD(+) is bound at residue 275–287; it reads GSAPDIANQNIAN.

This sequence belongs to the isocitrate and isopropylmalate dehydrogenases family. LeuB type 1 subfamily. As to quaternary structure, homodimer. It depends on Mg(2+) as a cofactor. Mn(2+) serves as cofactor.

The protein resides in the cytoplasm. It carries out the reaction (2R,3S)-3-isopropylmalate + NAD(+) = 4-methyl-2-oxopentanoate + CO2 + NADH. The protein operates within amino-acid biosynthesis; L-leucine biosynthesis; L-leucine from 3-methyl-2-oxobutanoate: step 3/4. In terms of biological role, catalyzes the oxidation of 3-carboxy-2-hydroxy-4-methylpentanoate (3-isopropylmalate) to 3-carboxy-4-methyl-2-oxopentanoate. The product decarboxylates to 4-methyl-2 oxopentanoate. This Listeria monocytogenes serovar 1/2a (strain ATCC BAA-679 / EGD-e) protein is 3-isopropylmalate dehydrogenase.